Consider the following 520-residue polypeptide: GMP synthase [glutamine-hydrolyzing] (520 aa).

The Glutamine amidotransferase type-1 domain occupies 9–202; the sequence is KILILDFGSQ…VRKICGCSGK (194 aa). Catalysis depends on Cys86, which acts as the Nucleophile. Catalysis depends on residues His176 and Glu178. The GMPS ATP-PPase domain maps to 203 to 395; sequence WTPGQIIEDA…LGLPHQMVWR (193 aa). ATP is bound at residue 230 to 236; it reads SGGVDSS.

In terms of assembly, homodimer.

It catalyses the reaction XMP + L-glutamine + ATP + H2O = GMP + L-glutamate + AMP + diphosphate + 2 H(+). The protein operates within purine metabolism; GMP biosynthesis; GMP from XMP (L-Gln route): step 1/1. In terms of biological role, catalyzes the synthesis of GMP from XMP. The protein is GMP synthase [glutamine-hydrolyzing] of Geotalea daltonii (strain DSM 22248 / JCM 15807 / FRC-32) (Geobacter daltonii).